Consider the following 82-residue polypeptide: Cytochrome c-551 (82 aa).

Heme c-binding residues include Cys12, Cys15, His16, and Met61.

Binds 1 heme c group covalently per subunit.

The protein is Cytochrome c-551 of Azotobacter vinelandii.